The sequence spans 489 residues: uncharacterized protein (489 aa).

Helical transmembrane passes span 29-49 (FIAS…TGLG), 67-87 (LLYA…KYLG), 90-110 (WALA…WYFD), 119-139 (IFTG…TAYI), 152-172 (FIAT…FIAF), 186-206 (AVYI…ILFI), 276-296 (LNNV…TLIL), 308-328 (IIGL…ELGW), 351-371 (GGAL…IVSV), 397-417 (AAGM…LGQG), and 418-438 (IIYF…TSIF).

It localises to the membrane. This is an uncharacterized protein from Schizosaccharomyces pombe (strain 972 / ATCC 24843) (Fission yeast).